We begin with the raw amino-acid sequence, 95 residues long: Citrate lyase acyl carrier protein (95 aa).

Position 14 is an O-(phosphoribosyl dephospho-coenzyme A)serine (Ser-14).

This sequence belongs to the CitD family. In terms of assembly, oligomer with a subunit composition of (alpha,beta,gamma)6.

The protein localises to the cytoplasm. Its function is as follows. Covalent carrier of the coenzyme of citrate lyase. This is Citrate lyase acyl carrier protein from Haemophilus influenzae (strain ATCC 51907 / DSM 11121 / KW20 / Rd).